The following is a 192-amino-acid chain: Peptidyl-tRNA hydrolase (192 aa).

Residue His-17 coordinates tRNA. His-22 acts as the Proton acceptor in catalysis. 3 residues coordinate tRNA: Phe-68, Asn-70, and Asn-116.

It belongs to the PTH family. As to quaternary structure, monomer.

The protein localises to the cytoplasm. It carries out the reaction an N-acyl-L-alpha-aminoacyl-tRNA + H2O = an N-acyl-L-amino acid + a tRNA + H(+). Functionally, hydrolyzes ribosome-free peptidyl-tRNAs (with 1 or more amino acids incorporated), which drop off the ribosome during protein synthesis, or as a result of ribosome stalling. Catalyzes the release of premature peptidyl moieties from peptidyl-tRNA molecules trapped in stalled 50S ribosomal subunits, and thus maintains levels of free tRNAs and 50S ribosomes. This Stenotrophomonas maltophilia (strain K279a) protein is Peptidyl-tRNA hydrolase.